A 196-amino-acid chain; its full sequence is Imidazoleglycerol-phosphate dehydratase (196 aa).

The protein belongs to the imidazoleglycerol-phosphate dehydratase family.

The protein localises to the cytoplasm. It catalyses the reaction D-erythro-1-(imidazol-4-yl)glycerol 3-phosphate = 3-(imidazol-4-yl)-2-oxopropyl phosphate + H2O. It functions in the pathway amino-acid biosynthesis; L-histidine biosynthesis; L-histidine from 5-phospho-alpha-D-ribose 1-diphosphate: step 6/9. The sequence is that of Imidazoleglycerol-phosphate dehydratase from Phenylobacterium zucineum (strain HLK1).